Here is a 167-residue protein sequence, read N- to C-terminus: Small ribosomal subunit protein uS3m (167 aa).

A mitochondrion-targeting transit peptide spans 1-35 (MAASVCSGLLGPRVLSWSRELPCAWRALHTSPVCA).

The protein belongs to the universal ribosomal protein uS3 family. As to quaternary structure, component of the mitochondrial small ribosomal subunit (mt-SSU). Mature mammalian 55S mitochondrial ribosomes consist of a small (28S) and a large (39S) subunit. The 28S small subunit contains a 12S ribosomal RNA (12S mt-rRNA) and 30 different proteins. The 39S large subunit contains a 16S rRNA (16S mt-rRNA), a copy of mitochondrial valine transfer RNA (mt-tRNA(Val)), which plays an integral structural role, and 52 different proteins.

Its subcellular location is the mitochondrion. The chain is Small ribosomal subunit protein uS3m (MRPS24) from Homo sapiens (Human).